The sequence spans 136 residues: uncharacterized protein (136 aa).

Transmembrane regions (helical) follow at residues 36-56 and 63-83; these read FLLT…IYLI and FAFA…LFLS.

Its subcellular location is the cell membrane. This is an uncharacterized protein from Mycoplasma pneumoniae (strain ATCC 29342 / M129 / Subtype 1) (Mycoplasmoides pneumoniae).